Here is a 211-residue protein sequence, read N- to C-terminus: Transcription antitermination protein NusB (211 aa).

Residues 152 to 211 (PAKKERVANPFPSTPPKKPENVPNPFSTPFKKNSSEPIRNPFEGNKSPQPPQKTLRRKKK) form a disordered region. Positions 175–188 (NPFSTPFKKNSSEP) are enriched in polar residues.

It belongs to the NusB family.

Involved in transcription antitermination. Required for transcription of ribosomal RNA (rRNA) genes. Binds specifically to the boxA antiterminator sequence of the ribosomal RNA (rrn) operons. The protein is Transcription antitermination protein NusB of Chloroherpeton thalassium (strain ATCC 35110 / GB-78).